The primary structure comprises 629 residues: tRNA uridine 5-carboxymethylaminomethyl modification enzyme MnmG (629 aa).

14-19 provides a ligand contact to FAD; it reads GAGHAG. An NAD(+)-binding site is contributed by 274-288; sequence GPRYCPSIEDKVVRF.

This sequence belongs to the MnmG family. In terms of assembly, homodimer. Heterotetramer of two MnmE and two MnmG subunits. It depends on FAD as a cofactor.

It is found in the cytoplasm. Functionally, NAD-binding protein involved in the addition of a carboxymethylaminomethyl (cmnm) group at the wobble position (U34) of certain tRNAs, forming tRNA-cmnm(5)s(2)U34. The sequence is that of tRNA uridine 5-carboxymethylaminomethyl modification enzyme MnmG from Xylella fastidiosa (strain Temecula1 / ATCC 700964).